The chain runs to 212 residues: Adenylate kinase (212 aa).

Position 10–15 (Gly-10–Thr-15) interacts with ATP. Residues Ser-30–Val-59 are NMP. Residues Thr-31, Arg-36, Glu-57 to Val-59, Gly-86 to Arg-89, and Gln-93 each bind AMP. The tract at residues Gly-127–Asp-159 is LID. Residues Arg-128 and Thr-137 to Phe-138 contribute to the ATP site. AMP is bound by residues Arg-156 and Arg-167. Gln-195 contributes to the ATP binding site.

Belongs to the adenylate kinase family. As to quaternary structure, monomer.

The protein localises to the cytoplasm. It carries out the reaction AMP + ATP = 2 ADP. The protein operates within purine metabolism; AMP biosynthesis via salvage pathway; AMP from ADP: step 1/1. In terms of biological role, catalyzes the reversible transfer of the terminal phosphate group between ATP and AMP. Plays an important role in cellular energy homeostasis and in adenine nucleotide metabolism. The polypeptide is Adenylate kinase (Streptococcus pyogenes serotype M1).